A 373-amino-acid chain; its full sequence is Spermidine/putrescine import ATP-binding protein PotA (373 aa).

The ABC transporter domain occupies 5–235 (IVFEHVSKKF…PKSSFVADFI (231 aa)). ATP is bound at residue 37 to 44 (GPSGCGKT).

The protein belongs to the ABC transporter superfamily. Spermidine/putrescine importer (TC 3.A.1.11.1) family. The complex is composed of two ATP-binding proteins (PotA), two transmembrane proteins (PotB and PotC) and a solute-binding protein (PotD).

Its subcellular location is the cell inner membrane. It catalyses the reaction ATP + H2O + polyamine-[polyamine-binding protein]Side 1 = ADP + phosphate + polyamineSide 2 + [polyamine-binding protein]Side 1.. Its function is as follows. Part of the ABC transporter complex PotABCD involved in spermidine/putrescine import. Responsible for energy coupling to the transport system. This is Spermidine/putrescine import ATP-binding protein PotA from Protochlamydia amoebophila (strain UWE25).